We begin with the raw amino-acid sequence, 744 residues long: Protein zyg-11 homolog B (744 aa).

3 LRR repeats span residues 185–208 (LPRLESLDISNTSITDITALLACK), 216–236 (MHHLKCLKMTTTQILDVVREL), and 237–261 (KHLNHLDISDDKQFTSDIALRLLEQ).

Belongs to the zyg-11 family. In terms of assembly, interacts with ELOC/Elongin C. Part of an E3 ubiquitin ligase complex including ZYG11B, CUL2 and Elongin BC.

Its function is as follows. Serves as substrate adapter subunit in the E3 ubiquitin ligase complex ZYG11B-CUL2-Elongin BC. Acts redudantly with ZER1 to target substrates bearing N-terminal glycine degrons for proteasomal degradation. Involved in the clearance of proteolytic fragments generated by caspase cleavage during apoptosis since N-terminal glycine degrons are strongly enriched at caspase cleavage sites. Also important in the quality control of protein N-myristoylation in which N-terminal glycine degrons are conditionally exposed after a failure of N-myristoylation. This is Protein zyg-11 homolog B from Mus musculus (Mouse).